The primary structure comprises 473 residues: Bactericidal permeability-increasing protein (473 aa).

The N-terminal stretch at 1–18 (MVLCCWLALVALIPMTLS) is a signal peptide. The central sheet, part 1 stretch occupies residues 19 to 29 (INPGVKVRLTG). Residues 28 to 209 (TGKGLEYGRQ…SDLNPQLKTL (182 aa)) form an N-terminal barrel region. An intrachain disulfide couples Cys153 to Cys192. Residues 211 to 275 (VLAKVDQYAE…INNMLYISVS (65 aa)) are central sheet, part 2. Residues 225-230 (MVSSPT) form a cleavage sites for elastase region. Positions 276–446 (AFTINSAAFV…LAKGYPLPTL (171 aa)) are C-terminal barrel. N-linked (GlcNAc...) asparagine glycosylation occurs at Asn365. The segment at 453–472 (NTELQVLKDYMLIGTDVQFT) is central sheet, part 3.

The protein belongs to the BPI/LBP/Plunc superfamily. BPI/LBP family. In terms of assembly, monomer. Homodimer; disulfide-linked. Expressed in spleen. Lower expression in gill, head kidney, entire kidney, skin, intestine and blood and lowest expression in liver and muscle.

The protein resides in the secreted. The cytotoxic action of BPI is limited to many species of Gram-negative bacteria; this specificity may be explained by a strong affinity of the very basic N-terminal half for the negatively charged lipopolysaccharides that are unique to the Gram-negative bacterial outer envelope. Exhibits neutralizing capacity towards P.aeruginosa lipopolysaccharides (LPS) and has bactericidal activity against multiple drug resistant (MDR) P.aeruginosa strains derived from people with cystic fibrosis. Has antibacterial activity against E.coli, but not against S.iniae. The protein is Bactericidal permeability-increasing protein of Sebastes schlegelii (Korean rockfish).